Consider the following 129-residue polypeptide: Tumor necrosis factor receptor superfamily member 12A (129 aa).

Residues 1–27 (MASAWPRSLPQILVLGFGLVLMRAAAG) form the signal peptide. Over 28-80 (EQAPGTSPCSSGSSWSADLDKCMDCASCPARPHSDFCLGCAAAPPAHFRLLWP) the chain is Extracellular. Cystine bridges form between C36–C49, C52–C67, and C55–C64. The stretch at 36-67 (CSSGSSWSADLDKCMDCASCPARPHSDFCLGC) is one TNFR-Cys; atypical repeat. The helical transmembrane segment at 81-101 (ILGGALSLVLVLALVSSFLVW) threads the bilayer. At 102 to 129 (RRCRRREKFTTPIEETGGEGCPGVALIQ) the chain is on the cytoplasmic side.

Associates with TRAF1 and TRAF2, and probably also with TRAF3. As to expression, highly expressed in fetal heart, intestine, kidney, liver, lung and skin, and in adult heart and ovary. Intermediate expression in adult kidney, lung and skin.

It localises to the membrane. Receptor for TNFSF12/TWEAK. Weak inducer of apoptosis in some cell types. Promotes angiogenesis and the proliferation of endothelial cells. May modulate cellular adhesion to matrix proteins. This Mus musculus (Mouse) protein is Tumor necrosis factor receptor superfamily member 12A (Tnfrsf12a).